The sequence spans 398 residues: Formate-dependent phosphoribosylglycinamide formyltransferase (398 aa).

N(1)-(5-phospho-beta-D-ribosyl)glycinamide contacts are provided by residues 21–22 (EL) and Glu-81. ATP contacts are provided by residues Arg-113, Lys-154, 194-197 (EEYV), and Glu-202. The region spanning 118–314 (RFAAEKVKVP…EFQVHVRSAL (197 aa)) is the ATP-grasp domain. Residues Glu-273 and Glu-285 each coordinate Mg(2+). Residues Asp-292, Lys-362, and 369–370 (RR) each bind N(1)-(5-phospho-beta-D-ribosyl)glycinamide.

It belongs to the PurK/PurT family. In terms of assembly, homodimer.

It catalyses the reaction N(1)-(5-phospho-beta-D-ribosyl)glycinamide + formate + ATP = N(2)-formyl-N(1)-(5-phospho-beta-D-ribosyl)glycinamide + ADP + phosphate + H(+). The protein operates within purine metabolism; IMP biosynthesis via de novo pathway; N(2)-formyl-N(1)-(5-phospho-D-ribosyl)glycinamide from N(1)-(5-phospho-D-ribosyl)glycinamide (formate route): step 1/1. Involved in the de novo purine biosynthesis. Catalyzes the transfer of formate to 5-phospho-ribosyl-glycinamide (GAR), producing 5-phospho-ribosyl-N-formylglycinamide (FGAR). Formate is provided by PurU via hydrolysis of 10-formyl-tetrahydrofolate. The sequence is that of Formate-dependent phosphoribosylglycinamide formyltransferase from Sulfolobus acidocaldarius (strain ATCC 33909 / DSM 639 / JCM 8929 / NBRC 15157 / NCIMB 11770).